Consider the following 430-residue polypeptide: Glutamate-1-semialdehyde 2,1-aminomutase (430 aa).

An N6-(pyridoxal phosphate)lysine modification is found at K265.

Belongs to the class-III pyridoxal-phosphate-dependent aminotransferase family. HemL subfamily. As to quaternary structure, homodimer. The cofactor is pyridoxal 5'-phosphate.

It localises to the cytoplasm. The enzyme catalyses (S)-4-amino-5-oxopentanoate = 5-aminolevulinate. It functions in the pathway porphyrin-containing compound metabolism; protoporphyrin-IX biosynthesis; 5-aminolevulinate from L-glutamyl-tRNA(Glu): step 2/2. This chain is Glutamate-1-semialdehyde 2,1-aminomutase, found in Shewanella baltica (strain OS155 / ATCC BAA-1091).